We begin with the raw amino-acid sequence, 355 residues long: UDP-N-acetylglucosamine--N-acetylmuramyl-(pentapeptide) pyrophosphoryl-undecaprenol N-acetylglucosamine transferase (355 aa).

UDP-N-acetyl-alpha-D-glucosamine-binding positions include 15–17 (TGG), N127, R163, S191, I244, 263–268 (ALTVSE), and Q288.

The protein belongs to the glycosyltransferase 28 family. MurG subfamily.

Its subcellular location is the cell inner membrane. The catalysed reaction is di-trans,octa-cis-undecaprenyl diphospho-N-acetyl-alpha-D-muramoyl-L-alanyl-D-glutamyl-meso-2,6-diaminopimeloyl-D-alanyl-D-alanine + UDP-N-acetyl-alpha-D-glucosamine = di-trans,octa-cis-undecaprenyl diphospho-[N-acetyl-alpha-D-glucosaminyl-(1-&gt;4)]-N-acetyl-alpha-D-muramoyl-L-alanyl-D-glutamyl-meso-2,6-diaminopimeloyl-D-alanyl-D-alanine + UDP + H(+). The protein operates within cell wall biogenesis; peptidoglycan biosynthesis. In terms of biological role, cell wall formation. Catalyzes the transfer of a GlcNAc subunit on undecaprenyl-pyrophosphoryl-MurNAc-pentapeptide (lipid intermediate I) to form undecaprenyl-pyrophosphoryl-MurNAc-(pentapeptide)GlcNAc (lipid intermediate II). The polypeptide is UDP-N-acetylglucosamine--N-acetylmuramyl-(pentapeptide) pyrophosphoryl-undecaprenol N-acetylglucosamine transferase (Escherichia coli O45:K1 (strain S88 / ExPEC)).